We begin with the raw amino-acid sequence, 228 residues long: Cytochrome c oxidase subunit 2 (228 aa).

Residues 1–14 (MAYPFQLGFQDATS) lie on the Mitochondrial intermembrane side of the membrane. A helical membrane pass occupies residues 15 to 45 (PIMEELLHFHDHTLMIVFLISSLVLYIISLM). Topologically, residues 46-59 (LTTKLTHTSTMDAQ) are mitochondrial matrix. A helical transmembrane segment spans residues 60-87 (EVETIWTILPAIILILIALPSLRILYMM). Residues 88-228 (DEINNPALTV…FEKWSTSMLT (141 aa)) lie on the Mitochondrial intermembrane side of the membrane. 6 residues coordinate Cu cation: His161, Cys196, Glu198, Cys200, His204, and Met207. Glu198 contributes to the Mg(2+) binding site. Phosphotyrosine is present on Tyr218.

It belongs to the cytochrome c oxidase subunit 2 family. In terms of assembly, component of the cytochrome c oxidase (complex IV, CIV), a multisubunit enzyme composed of 14 subunits. The complex is composed of a catalytic core of 3 subunits MT-CO1, MT-CO2 and MT-CO3, encoded in the mitochondrial DNA, and 11 supernumerary subunits COX4I, COX5A, COX5B, COX6A, COX6B, COX6C, COX7A, COX7B, COX7C, COX8 and NDUFA4, which are encoded in the nuclear genome. The complex exists as a monomer or a dimer and forms supercomplexes (SCs) in the inner mitochondrial membrane with NADH-ubiquinone oxidoreductase (complex I, CI) and ubiquinol-cytochrome c oxidoreductase (cytochrome b-c1 complex, complex III, CIII), resulting in different assemblies (supercomplex SCI(1)III(2)IV(1) and megacomplex MCI(2)III(2)IV(2)). Found in a complex with TMEM177, COA6, COX18, COX20, SCO1 and SCO2. Interacts with TMEM177 in a COX20-dependent manner. Interacts with COX20. Interacts with COX16. Cu cation is required as a cofactor.

The protein resides in the mitochondrion inner membrane. The catalysed reaction is 4 Fe(II)-[cytochrome c] + O2 + 8 H(+)(in) = 4 Fe(III)-[cytochrome c] + 2 H2O + 4 H(+)(out). Functionally, component of the cytochrome c oxidase, the last enzyme in the mitochondrial electron transport chain which drives oxidative phosphorylation. The respiratory chain contains 3 multisubunit complexes succinate dehydrogenase (complex II, CII), ubiquinol-cytochrome c oxidoreductase (cytochrome b-c1 complex, complex III, CIII) and cytochrome c oxidase (complex IV, CIV), that cooperate to transfer electrons derived from NADH and succinate to molecular oxygen, creating an electrochemical gradient over the inner membrane that drives transmembrane transport and the ATP synthase. Cytochrome c oxidase is the component of the respiratory chain that catalyzes the reduction of oxygen to water. Electrons originating from reduced cytochrome c in the intermembrane space (IMS) are transferred via the dinuclear copper A center (CU(A)) of subunit 2 and heme A of subunit 1 to the active site in subunit 1, a binuclear center (BNC) formed by heme A3 and copper B (CU(B)). The BNC reduces molecular oxygen to 2 water molecules using 4 electrons from cytochrome c in the IMS and 4 protons from the mitochondrial matrix. This chain is Cytochrome c oxidase subunit 2 (MT-CO2), found in Sus scrofa (Pig).